We begin with the raw amino-acid sequence, 100 residues long: uncharacterized protein (100 aa).

It localises to the mitochondrion. This is an uncharacterized protein from Arabidopsis thaliana (Mouse-ear cress).